Consider the following 100-residue polypeptide: MVKRTHGYRYKSRKLLRKKPRERGLSGLSRLLYEYKPGDRVVIDIDPTFVENAPHRRYQGKVGVVIGTRGRAYVIETYLGDKKKILVVTPEHLKPHQGGS.

Positions 1–21 (MVKRTHGYRYKSRKLLRKKPR) are disordered.

The protein belongs to the eukaryotic ribosomal protein eL21 family.

The polypeptide is Large ribosomal subunit protein eL21 (Pyrobaculum islandicum (strain DSM 4184 / JCM 9189 / GEO3)).